Reading from the N-terminus, the 348-residue chain is Propane 2-monooxygenase, reductase component (348 aa).

The 2Fe-2S ferredoxin-type domain occupies 5–95 (HKINFEPVDI…DCTIELLNFD (91 aa)). Residues C39, C44, C47, and C79 each coordinate [2Fe-2S] cluster. An FAD-binding FR-type domain is found at 105–206 (IQDVRTEVLA…TGPYGSFTLK (102 aa)).

The protein belongs to the bacterial ring-hydroxylating dioxygenase ferredoxin reductase family. In terms of assembly, the propane 2-monooxygenase multicomponent enzyme system is composed of an electron transfer component and a monooxygenase component interacting with the effector protein MimD. The electron transfer component is composed of a reductase (MimB), and the monooxygenase component is formed by a large subunit (MimA) and a small subunit (MimC). It depends on FAD as a cofactor. Requires [2Fe-2S] cluster as cofactor.

Its function is as follows. Reductase component of the propane 2-monooxygenase multicomponent enzyme system which is involved in the degradation of propane via the O2-dependent hydroxylation of propane. Reductase catalyzes the transfer of electrons from NADH or NADPH to monooxygenase. This is Propane 2-monooxygenase, reductase component from Mycolicibacterium goodii (Mycobacterium goodii).